The chain runs to 335 residues: L-carnitine dehydrogenase (335 aa).

Position 29-34 (29-34 (GTGVIG)) interacts with NAD(+).

The protein belongs to the 3-hydroxyacyl-CoA dehydrogenase family. L-carnitine dehydrogenase subfamily. Homodimer.

Its subcellular location is the cytoplasm. The catalysed reaction is carnitine + NAD(+) = 3-dehydrocarnitine + NADH + H(+). Its pathway is amine and polyamine metabolism; carnitine metabolism. In terms of biological role, catalyzes the NAD(+)-dependent oxidation of L-carnitine to 3-dehydrocarnitine. In Streptomyces griseus subsp. griseus (strain JCM 4626 / CBS 651.72 / NBRC 13350 / KCC S-0626 / ISP 5235), this protein is L-carnitine dehydrogenase.